Consider the following 950-residue polypeptide: Protocadherin alpha-3 (950 aa).

The signal sequence occupies residues 1 to 29 (MLFSWREDPGAQCLLLSLLLLAASEVGSG). Cadherin domains lie at 30 to 133 (QLHY…APVF), 134 to 242 (PMAV…APAF), 243 to 350 (ERTI…VPEL), 351 to 455 (VIQS…APAF), 456 to 565 (SQSE…APAL), and 581 to 678 (VPRS…APKA). Residues 30 to 697 (QLHYSVSEEA…GPEAALVDVN (668 aa)) are Extracellular-facing. 2 N-linked (GlcNAc...) asparagine glycosylation sites follow: Asn257 and Asn265. N-linked (GlcNAc...) asparagine glycosylation is present at Asn548. A helical membrane pass occupies residues 698-718 (VYLIVAICAVSSLLVLTLLLY). The Cytoplasmic segment spans residues 719–950 (TALRCSAPPT…GNSTTDNSDQ (232 aa)). PXXP repeat units follow at residues 734-737 (PGKP) and 774-777 (PSLP). A 6 X 4 AA repeats of P-X-X-P region spans residues 734 to 894 (PGKPTLVCSS…PDKFIIPGSP (161 aa)). Disordered stretches follow at residues 777–806 (PPCP…NPDW), 831–856 (GPGG…EVSP), and 869–950 (FKYG…NSDQ). Residues 782-797 (SRDREEKQDVDVDLSA) are compositionally biased toward basic and acidic residues. PXXP repeat units lie at residues 799 to 802 (PRQP), 832 to 835 (PGGP), 873 to 876 (PGNP), and 891 to 894 (PGSP). A compositionally biased stretch (basic and acidic residues) spans 909–923 (DKSDFITFGKKEETK).

The protein localises to the cell membrane. Its function is as follows. Potential calcium-dependent cell-adhesion protein. May be involved in the establishment and maintenance of specific neuronal connections in the brain. The sequence is that of Protocadherin alpha-3 (PCDHA3) from Homo sapiens (Human).